The following is a 179-amino-acid chain: UPF0398 protein SSU05_0416 (179 aa).

The protein belongs to the UPF0398 family.

In Streptococcus suis (strain 05ZYH33), this protein is UPF0398 protein SSU05_0416.